The sequence spans 413 residues: Cell division protein FtsA (413 aa).

It belongs to the FtsA/MreB family. As to quaternary structure, self-interacts. Interacts with FtsZ.

Its subcellular location is the cell inner membrane. Cell division protein that is involved in the assembly of the Z ring. May serve as a membrane anchor for the Z ring. This Borreliella burgdorferi (strain ATCC 35210 / DSM 4680 / CIP 102532 / B31) (Borrelia burgdorferi) protein is Cell division protein FtsA.